Consider the following 365-residue polypeptide: Succinyl-diaminopimelate desuccinylase (365 aa).

Residue His64 participates in Zn(2+) binding. The active site involves Asp66. Asp95 is a binding site for Zn(2+). The active-site Proton acceptor is the Glu125. Zn(2+) is bound by residues Glu126, Glu154, and His339.

Belongs to the peptidase M20A family. DapE subfamily. Homodimer. Zn(2+) serves as cofactor. Co(2+) is required as a cofactor.

The enzyme catalyses N-succinyl-(2S,6S)-2,6-diaminopimelate + H2O = (2S,6S)-2,6-diaminopimelate + succinate. The protein operates within amino-acid biosynthesis; L-lysine biosynthesis via DAP pathway; LL-2,6-diaminopimelate from (S)-tetrahydrodipicolinate (succinylase route): step 3/3. Functionally, catalyzes the hydrolysis of N-succinyl-L,L-diaminopimelic acid (SDAP), forming succinate and LL-2,6-diaminopimelate (DAP), an intermediate involved in the bacterial biosynthesis of lysine and meso-diaminopimelic acid, an essential component of bacterial cell walls. The protein is Succinyl-diaminopimelate desuccinylase of Sulfurimonas denitrificans (strain ATCC 33889 / DSM 1251) (Thiomicrospira denitrificans (strain ATCC 33889 / DSM 1251)).